A 978-amino-acid polypeptide reads, in one-letter code: Sensor histidine kinase TodS (978 aa).

The region spanning 32-103 is the PAS 1 domain; it reads CEEHARIIFD…TQKRLVETAS (72 aa). Residues 108-162 form the PAC 1 domain; sequence VRCDVEILGKSGGREVIAVDFSLLPICNEEGSIVYLLAEGRNITDKKKAEAMLAL. The Histidine kinase 1 domain occupies 187–405; the sequence is KVSHELRTPL…LFQVKLPLNA (219 aa). His-190 carries the post-translational modification Phosphohistidine; by autocatalysis. Residues 452 to 567 form the Response regulatory domain; it reads RVLIVEDNPD…ELRARVSNLV (116 aa). A 4-aspartylphosphate modification is found at Asp-500. The PAS 2 domain occupies 611–681; it reads SEARWKAVYE…QRLANLLQGG (71 aa). Residues 685-737 form the PAC 2 domain; it reads YSVERSYLCKNGSTIWANASVSLMPQRVGESPVILQIIDDITEKKQAQENLNQ. Residues 757–974 enclose the Histidine kinase 2 domain; the sequence is YIAHEINQPL…CFLVSIPARQ (218 aa). Residue His-760 is modified to Phosphohistidine.

As to quaternary structure, homodimer. Binds as a dimer to a pseudopalindromic sequence. In terms of processing, autophosphorylated. Activation requires a sequential transfer of a phosphate group from a His in the primary transmitter domain, to an Asp in the receiver domain and to a His in the secondary transmitter domain.

It localises to the cytoplasm. It carries out the reaction ATP + protein L-histidine = ADP + protein N-phospho-L-histidine.. Functionally, member of the two-component regulatory system TodS/TodT involved in the regulation of toluene degradation. Phosphorylates TodT via a four-step phosphorelay in response to toluene. The polypeptide is Sensor histidine kinase TodS (todS) (Pseudomonas putida (strain ATCC 700007 / DSM 6899 / JCM 31910 / BCRC 17059 / LMG 24140 / F1)).